Consider the following 573-residue polypeptide: Proline--tRNA ligase (573 aa).

It belongs to the class-II aminoacyl-tRNA synthetase family. ProS type 1 subfamily. Homodimer.

The protein localises to the cytoplasm. It carries out the reaction tRNA(Pro) + L-proline + ATP = L-prolyl-tRNA(Pro) + AMP + diphosphate. Catalyzes the attachment of proline to tRNA(Pro) in a two-step reaction: proline is first activated by ATP to form Pro-AMP and then transferred to the acceptor end of tRNA(Pro). As ProRS can inadvertently accommodate and process non-cognate amino acids such as alanine and cysteine, to avoid such errors it has two additional distinct editing activities against alanine. One activity is designated as 'pretransfer' editing and involves the tRNA(Pro)-independent hydrolysis of activated Ala-AMP. The other activity is designated 'posttransfer' editing and involves deacylation of mischarged Ala-tRNA(Pro). The misacylated Cys-tRNA(Pro) is not edited by ProRS. The polypeptide is Proline--tRNA ligase (Methylobacillus flagellatus (strain ATCC 51484 / DSM 6875 / VKM B-1610 / KT)).